The sequence spans 546 residues: CTP synthase (546 aa).

Residues 1 to 269 (MNSNTKIIFV…DAKLVELLNL (269 aa)) form an amidoligase domain region. S16 is a binding site for CTP. S16 contacts UTP. Residues 17–22 (SLGKGV) and D74 contribute to the ATP site. Mg(2+)-binding residues include D74 and E143. CTP contacts are provided by residues 150-152 (DIE), 190-195 (KTKPTQ), and K226. UTP contacts are provided by residues 190-195 (KTKPTQ) and K226. One can recognise a Glutamine amidotransferase type-1 domain in the interval 294–546 (TIAMVGKYVS…IQAAIENSNN (253 aa)). G356 provides a ligand contact to L-glutamine. C383 serves as the catalytic Nucleophile; for glutamine hydrolysis. L-glutamine contacts are provided by residues 384 to 387 (LGMQ), E407, and R474. Residues H519 and E521 contribute to the active site.

This sequence belongs to the CTP synthase family. Homotetramer.

The enzyme catalyses UTP + L-glutamine + ATP + H2O = CTP + L-glutamate + ADP + phosphate + 2 H(+). It catalyses the reaction L-glutamine + H2O = L-glutamate + NH4(+). It carries out the reaction UTP + NH4(+) + ATP = CTP + ADP + phosphate + 2 H(+). The protein operates within pyrimidine metabolism; CTP biosynthesis via de novo pathway; CTP from UDP: step 2/2. Its activity is regulated as follows. Allosterically activated by GTP, when glutamine is the substrate; GTP has no effect on the reaction when ammonia is the substrate. The allosteric effector GTP functions by stabilizing the protein conformation that binds the tetrahedral intermediate(s) formed during glutamine hydrolysis. Inhibited by the product CTP, via allosteric rather than competitive inhibition. Its function is as follows. Catalyzes the ATP-dependent amination of UTP to CTP with either L-glutamine or ammonia as the source of nitrogen. Regulates intracellular CTP levels through interactions with the four ribonucleotide triphosphates. This Francisella tularensis subsp. tularensis (strain FSC 198) protein is CTP synthase.